We begin with the raw amino-acid sequence, 66 residues long: Surface composition regulator (66 aa).

The protein belongs to the GlgS family.

Functionally, major determinant of cell surface composition. Negatively regulates motility, adhesion and synthesis of biofilm exopolysaccharides. In Escherichia coli O127:H6 (strain E2348/69 / EPEC), this protein is Surface composition regulator.